Here is a 622-residue protein sequence, read N- to C-terminus: Low affinity potassium transport system protein Kup (622 aa).

Transmembrane regions (helical) follow at residues 9–29, 49–69, 103–123, 137–157, 165–185, 213–233, 247–267, 276–296, 337–357, 363–383, 396–416, and 419–439; these read LPAI…TSPL, VFGF…IKYL, VIMG…TPAI, PQLD…LFMI, VGKL…GLGL, VSFI…ALYA, WFTV…ALLL, PFFL…AALA, IYIP…IVSF, LAAA…ILST, FVAL…TANL, and LLSG…VMTT.

This sequence belongs to the HAK/KUP transporter (TC 2.A.72) family.

The protein localises to the cell inner membrane. It carries out the reaction K(+)(in) + H(+)(in) = K(+)(out) + H(+)(out). Functionally, responsible for the low-affinity transport of potassium into the cell. Likely operates as a K(+):H(+) symporter. This is Low affinity potassium transport system protein Kup from Escherichia coli O157:H7.